Consider the following 309-residue polypeptide: MYKQANPDLWQGRIDSETDESQFRHFQTIELKDINETKVDKKAGTGILGYAVDKGVELNNGRVGAQEGPDAVRKAFGNLSVLTPCPVYDYGNVYHDHDHLIDTQEEYAELAAKMFQNHNYSFLVGGGHDIAYAQYLAMRKAYPDSSIGVINIDAHFDTRKADSSTSGTSFRQILEGDDNADYFVLGIQSASNTKSLFDYAEERGIEYVTADEILHEISPTIKDKIDHFINRHDVIMFTICMDVVDSAFAPGVSAPAVNGLTPHIILELSRRIVGHPKLVSISVAETNPLYDMDNRTAKLVALFLHNFIH.

Residues His128, Asp153, His155, Asp157, Cys240, and Asp242 each contribute to the Mn(2+) site.

The protein belongs to the arginase family. Mn(2+) serves as cofactor.

It catalyses the reaction N-formimidoyl-L-glutamate + H2O = formamide + L-glutamate. It participates in amino-acid degradation; L-histidine degradation into L-glutamate; L-glutamate from N-formimidoyl-L-glutamate (hydrolase route): step 1/1. In terms of biological role, catalyzes the conversion of N-formimidoyl-L-glutamate to L-glutamate and formamide. This chain is Formimidoylglutamase, found in Staphylococcus carnosus (strain TM300).